The following is a 512-amino-acid chain: Glutathione-binding protein GsiB (512 aa).

Residues 1 to 26 (MARAVHRSGLVALGIATALMASCAFA) form the signal peptide.

Belongs to the bacterial solute-binding protein 5 family. The complex is composed of two ATP-binding proteins (GsiA), two transmembrane proteins (GsiC and GsiD) and a solute-binding protein (GsiB).

The protein localises to the periplasm. Its function is as follows. Part of the ABC transporter complex GsiABCD involved in glutathione import. Binds glutathione. The chain is Glutathione-binding protein GsiB from Escherichia coli O1:K1 / APEC.